The primary structure comprises 360 residues: UDP-3-O-acylglucosamine N-acyltransferase (360 aa).

The Proton acceptor role is filled by His256. Positions 341–360 (EGSGAETAARPDDDRDEGRG) are disordered. A compositionally biased stretch (basic and acidic residues) spans 349-360 (ARPDDDRDEGRG).

Belongs to the transferase hexapeptide repeat family. LpxD subfamily. Homotrimer.

The catalysed reaction is a UDP-3-O-[(3R)-3-hydroxyacyl]-alpha-D-glucosamine + a (3R)-hydroxyacyl-[ACP] = a UDP-2-N,3-O-bis[(3R)-3-hydroxyacyl]-alpha-D-glucosamine + holo-[ACP] + H(+). Its pathway is bacterial outer membrane biogenesis; LPS lipid A biosynthesis. In terms of biological role, catalyzes the N-acylation of UDP-3-O-acylglucosamine using 3-hydroxyacyl-ACP as the acyl donor. Is involved in the biosynthesis of lipid A, a phosphorylated glycolipid that anchors the lipopolysaccharide to the outer membrane of the cell. The protein is UDP-3-O-acylglucosamine N-acyltransferase of Rhodopseudomonas palustris (strain ATCC BAA-98 / CGA009).